Reading from the N-terminus, the 258-residue chain is Putative cysteine-rich repeat secretory protein 35 (258 aa).

Residues 1–29 (MYSSYSLSKRLIYVPILAIQFLLVRSVSS) form the signal peptide. Gnk2-homologous domains are found at residues 36 to 138 (YLNH…TIKP) and 146 to 255 (FKNT…LYPF).

Belongs to the cysteine-rich repeat secretory protein family.

The protein resides in the secreted. The chain is Putative cysteine-rich repeat secretory protein 35 (CRRSP35) from Arabidopsis thaliana (Mouse-ear cress).